The sequence spans 354 residues: 3-isopropylmalate dehydrogenase (354 aa).

G76–E87 lines the NAD(+) pocket. Residues R94, R104, R130, and D215 each coordinate substrate. D215, D239, and D243 together coordinate Mg(2+). G273–N285 is a binding site for NAD(+).

It belongs to the isocitrate and isopropylmalate dehydrogenases family. LeuB type 1 subfamily. Homodimer. The cofactor is Mg(2+). It depends on Mn(2+) as a cofactor.

The protein resides in the cytoplasm. It carries out the reaction (2R,3S)-3-isopropylmalate + NAD(+) = 4-methyl-2-oxopentanoate + CO2 + NADH. Its pathway is amino-acid biosynthesis; L-leucine biosynthesis; L-leucine from 3-methyl-2-oxobutanoate: step 3/4. Its function is as follows. Catalyzes the oxidation of 3-carboxy-2-hydroxy-4-methylpentanoate (3-isopropylmalate) to 3-carboxy-4-methyl-2-oxopentanoate. The product decarboxylates to 4-methyl-2 oxopentanoate. The polypeptide is 3-isopropylmalate dehydrogenase (Bacillus cereus (strain ATCC 14579 / DSM 31 / CCUG 7414 / JCM 2152 / NBRC 15305 / NCIMB 9373 / NCTC 2599 / NRRL B-3711)).